The sequence spans 361 residues: Aurora kinase B-A (361 aa).

In terms of domain architecture, Protein kinase spans 93 to 343; sequence FDIGRPLGKG…LKGVMEHPWV (251 aa). ATP-binding positions include 99 to 107 and lysine 122; that span reads LGKGKFGNV. Catalysis depends on aspartate 216, which acts as the Proton acceptor.

The protein belongs to the protein kinase superfamily. Ser/Thr protein kinase family. Aurora subfamily. As to quaternary structure, component of the CPC at least composed of survivin/birc5, incenp, cdca8/borealin and/or cdca9/dasra-A, and aurkb/aurora-B. Interacts directly (via N-terminus and kinase domain) with incenp (via C terminus), and may weakly interact (via N-terminus) with birc5.1 to stabilize the complex. Interacts with mtus1. Mg(2+) is required as a cofactor. In terms of processing, phosphorylated, stimulates kinase activity.

The protein localises to the nucleus. The protein resides in the chromosome. The catalysed reaction is L-seryl-[protein] + ATP = O-phospho-L-seryl-[protein] + ADP + H(+). It catalyses the reaction L-threonyl-[protein] + ATP = O-phospho-L-threonyl-[protein] + ADP + H(+). Kinase activity is stimulated by both birc5/survivin-binding and cell-cycle specific phosphorylation. Its function is as follows. Serine/threonine-protein kinase component of the chromosomal passenger complex (CPC), a complex that acts as a key regulator of mitosis. The CPC complex has essential functions at the centromere in ensuring correct chromosome alignment and segregation and is required for chromatin-induced microtubule stabilization and spindle assembly. Involved in the bipolar attachment of spindle microtubules to kinetochores and is a key regulator for the onset of cytokinesis during mitosis. Required for central/midzone spindle assembly and cleavage furrow formation. Key component of the cytokinesis checkpoint, a process required to delay abscission to prevent both premature resolution of intercellular chromosome bridges and accumulation of DNA damage. Phosphorylates 'Ser-10' of histone H3 during mitosis. The polypeptide is Aurora kinase B-A (aurkb-a) (Xenopus laevis (African clawed frog)).